The sequence spans 340 residues: Nitrilase (340 aa).

The CN hydrolase domain maps to 7–273 (IRAAAVQIAP…EGMVVADLDM (267 aa)). The active-site Proton acceptor is Glu-47. The active site involves Lys-129. Cys-163 functions as the Nucleophile in the catalytic mechanism.

This sequence belongs to the carbon-nitrogen hydrolase superfamily. Nitrilase family. As to quaternary structure, forms oligomers.

The enzyme catalyses a nitrile + 2 H2O = a carboxylate + NH4(+). The catalysed reaction is phenylpropanonitrile + 2 H2O = 3-phenylpropanoate + NH4(+). It catalyses the reaction an aliphatic nitrile + 2 H2O = a carboxylate + NH4(+). Highly resistant to various miscible cosolvents and tolerates high substrate concentrations. In terms of biological role, catalyzes the hydrolysis of a broad range of nitriles to yield their corresponding carboxylic acid and ammonia. In vitro, shows high activity toward benzylic/unsaturated nitriles. The preferred substrate is trans-cinnamonitrile, followed by mono/di-cyanopyridines and aromatic substituted nitriles, with a moderate activity toward 3-phenylpropionitrile. Shows weaker activity toward the common dinitrile fumaronitrile. Also shows weak activity toward some aliphatic nitriles, including adiponitrile and glutaronitrile, and the arylacetonitrile 2-thiopheneacetonitrile. This Paraburkholderia phymatum (strain DSM 17167 / CIP 108236 / LMG 21445 / STM815) (Burkholderia phymatum) protein is Nitrilase.